A 239-amino-acid polypeptide reads, in one-letter code: Purine nucleoside phosphorylase DeoD-type (239 aa).

Histidine 5 provides a ligand contact to a purine D-ribonucleoside. Residues glycine 21, arginine 25, arginine 44, and 88-91 each bind phosphate; that span reads RIGS. Residues 180–182 and 204–205 contribute to the a purine D-ribonucleoside site; these read EME and TD. Aspartate 205 serves as the catalytic Proton donor.

This sequence belongs to the PNP/UDP phosphorylase family. Homohexamer; trimer of homodimers.

The enzyme catalyses a purine D-ribonucleoside + phosphate = a purine nucleobase + alpha-D-ribose 1-phosphate. The catalysed reaction is a purine 2'-deoxy-D-ribonucleoside + phosphate = a purine nucleobase + 2-deoxy-alpha-D-ribose 1-phosphate. In terms of biological role, catalyzes the reversible phosphorolytic breakdown of the N-glycosidic bond in the beta-(deoxy)ribonucleoside molecules, with the formation of the corresponding free purine bases and pentose-1-phosphate. The sequence is that of Purine nucleoside phosphorylase DeoD-type from Aliivibrio fischeri (strain ATCC 700601 / ES114) (Vibrio fischeri).